The following is a 499-amino-acid chain: GTPase Der (499 aa).

2 EngA-type G domains span residues 3 to 166 (PVVA…LETL) and 213 to 386 (IKFA…QSAT). Residues 9 to 16 (GRPNVGKS), 56 to 60 (DTGGI), 118 to 121 (NKTD), 219 to 226 (GRPNVGKS), 266 to 270 (DTAGV), and 331 to 334 (NKWD) each bind GTP. Residues 387–471 (RRTSTAMLTR…PVRVEFQESA (85 aa)) enclose the KH-like domain.

It belongs to the TRAFAC class TrmE-Era-EngA-EngB-Septin-like GTPase superfamily. EngA (Der) GTPase family. As to quaternary structure, associates with the 50S ribosomal subunit.

GTPase that plays an essential role in the late steps of ribosome biogenesis. The sequence is that of GTPase Der from Aeromonas hydrophila subsp. hydrophila (strain ATCC 7966 / DSM 30187 / BCRC 13018 / CCUG 14551 / JCM 1027 / KCTC 2358 / NCIMB 9240 / NCTC 8049).